The sequence spans 460 residues: MIDRQLLRKNPDAIRGALDEKGVTDVNLDQILTLDQEWRERKARGDELRHERNQISSKIGKLKAAGDEDAASEAIAQSQELKNELEEIEREADKLKSELDTAMLKIPQVPDDAVPVGTDESENVERRREGFDSLRSLPDTVIPHYDLGEELEILDFERGAKVTGGGFYFAKGDGARLEHALVQFMLDIHREQGYQDVFPPIPVNSQSMVGTGQFPKFTEDAYRIGETNDEPWDNDDLWLCPTAEVPVTNMYRDEILLDDDLPVKIQAYTPNFRREAGEHGTETRGIVRVHQFNKVELVNFVRPEDSAERFDGLLTEAEVVLQRLGLPYRILEMCTGDLGFTQRKKYDIEVWAPGDDMATGPDIGGRWLEVSSVSNFGAFQSRRAGLRYRPERHESASYLHTLNGSGVAVPRVMVAIMEYYQNDDGTITIPEPLQPYMNGLSVIEGHDPVGEAAVGAGKRE.

242–244 (TAE) is a binding site for L-serine. Residues 273–275 (RRE) and V289 contribute to the ATP site. E296 provides a ligand contact to L-serine. Position 369–372 (369–372 (EVSS)) interacts with ATP. An L-serine-binding site is contributed by S405.

Belongs to the class-II aminoacyl-tRNA synthetase family. Type-1 seryl-tRNA synthetase subfamily. As to quaternary structure, homodimer. The tRNA molecule binds across the dimer.

The protein resides in the cytoplasm. It carries out the reaction tRNA(Ser) + L-serine + ATP = L-seryl-tRNA(Ser) + AMP + diphosphate + H(+). The enzyme catalyses tRNA(Sec) + L-serine + ATP = L-seryl-tRNA(Sec) + AMP + diphosphate + H(+). Its pathway is aminoacyl-tRNA biosynthesis; selenocysteinyl-tRNA(Sec) biosynthesis; L-seryl-tRNA(Sec) from L-serine and tRNA(Sec): step 1/1. In terms of biological role, catalyzes the attachment of serine to tRNA(Ser). Is also able to aminoacylate tRNA(Sec) with serine, to form the misacylated tRNA L-seryl-tRNA(Sec), which will be further converted into selenocysteinyl-tRNA(Sec). The sequence is that of Serine--tRNA ligase from Haloquadratum walsbyi (strain DSM 16790 / HBSQ001).